The primary structure comprises 654 residues: Fatty acid photodecarboxylase, chloroplastic (654 aa).

The N-terminal 62 residues, 1–62, are a transit peptide targeting the chloroplast; that stretch reads MASITSRASA…RRGGALSARA (62 aa). FAD-binding positions include 93 to 94, glutamate 114, leucine 162, serine 166, 170 to 173, and valine 298; these read TA and NATL. 4 residues coordinate hexadecanoate: cysteine 432, arginine 451, tyrosine 466, and glutamine 486. An FAD-binding site is contributed by glycine 622.

Belongs to the GMC oxidoreductase family. FAD is required as a cofactor.

The protein localises to the plastid. The protein resides in the chloroplast. It catalyses the reaction a long-chain fatty acid + hnu + H(+) = a long-chain alkane + CO2. The enzyme catalyses hnu + hexadecanoate + H(+) = pentadecane + CO2. The catalysed reaction is hnu + octadecanoate + H(+) = heptadecane + CO2. It carries out the reaction heptadecanoate + hnu + H(+) = hexadecane + CO2. It catalyses the reaction hnu + tetradecanoate + H(+) = tridecane + CO2. The enzyme catalyses octanoate + hnu + H(+) = heptane + CO2. Activated by blue light and repressed by red light. Functionally, catalyzes the decarboxylation of free fatty acids to n-alkanes or n-alkenes in response to blue light. Substrate preference is toward fatty acids with C16 or C17 chains. Converts n-octanoic acid (C8 chain) more efficiently than palmitate (n-hexadecanoic acid, C16 chain) into n-heptane (C7 chain) and n-pentadecane (C15 chain), respectively, partly due to an autocatalytic effect of its n-heptane product. Saturated fatty acids are converted to alkanes, not alkenes. The decarboxylation is initiated through electron abstraction from the fatty acid by the photo-excited FAD. The protein is Fatty acid photodecarboxylase, chloroplastic of Chlorella variabilis (Green alga).